Consider the following 626-residue polypeptide: Phosphoenolpyruvate carboxykinase (ATP) 2 (626 aa).

2 disordered regions span residues 1–23 (MASP…APVN) and 64–86 (PNLV…KHQQ). 324–331 (GLSGTGKT) lines the ATP pocket.

This sequence belongs to the phosphoenolpyruvate carboxykinase (ATP) family. In terms of assembly, homohexamer.

The protein resides in the cytoplasm. The catalysed reaction is oxaloacetate + ATP = phosphoenolpyruvate + ADP + CO2. The protein operates within carbohydrate biosynthesis; gluconeogenesis. This is Phosphoenolpyruvate carboxykinase (ATP) 2 (PCK2) from Urochloa panicoides (Panic liverseed grass).